Reading from the N-terminus, the 125-residue chain is Fluoride-specific ion channel FluC (125 aa).

4 helical membrane passes run 1–21 (MIQAILVAFGGAIGSVLRYYV), 32–52 (AFPWGTLAVNVVGCFVIGVFA), 68–88 (LLITGFLGGFTTFSAFSLDAI), and 101–121 (IYIAASVGLSMAAVIAGLAVM). Na(+) contacts are provided by Gly75 and Thr78.

It belongs to the fluoride channel Fluc/FEX (TC 1.A.43) family.

The protein resides in the cell inner membrane. The enzyme catalyses fluoride(in) = fluoride(out). Its activity is regulated as follows. Na(+) is not transported, but it plays an essential structural role and its presence is essential for fluoride channel function. Functionally, fluoride-specific ion channel. Important for reducing fluoride concentration in the cell, thus reducing its toxicity. This Rhizobium johnstonii (strain DSM 114642 / LMG 32736 / 3841) (Rhizobium leguminosarum bv. viciae) protein is Fluoride-specific ion channel FluC.